The following is a 399-amino-acid chain: tRNA-specific 2-thiouridylase MnmA (399 aa).

Residues 18-25 and L44 each bind ATP; that span reads AMSGGVDS. C112 (nucleophile) is an active-site residue. Cysteines 112 and 213 form a disulfide. G136 is an ATP binding site. An interaction with tRNA region spans residues 163-165; the sequence is RDQ. Catalysis depends on C213, which acts as the Cysteine persulfide intermediate.

Belongs to the MnmA/TRMU family.

Its subcellular location is the cytoplasm. The catalysed reaction is S-sulfanyl-L-cysteinyl-[protein] + uridine(34) in tRNA + AH2 + ATP = 2-thiouridine(34) in tRNA + L-cysteinyl-[protein] + A + AMP + diphosphate + H(+). Catalyzes the 2-thiolation of uridine at the wobble position (U34) of tRNA, leading to the formation of s(2)U34. In Rhizobium leguminosarum bv. trifolii (strain WSM2304), this protein is tRNA-specific 2-thiouridylase MnmA.